Reading from the N-terminus, the 169-residue chain is Photosystem I assembly protein Ycf3 (169 aa).

3 TPR repeats span residues 35-68 (AFTY…EIDP), 72-105 (SYIL…NPSL), and 120-153 (GEQA…APGN).

The protein belongs to the Ycf3 family.

The protein resides in the plastid. It is found in the chloroplast thylakoid membrane. Functionally, essential for the assembly of the photosystem I (PSI) complex. May act as a chaperone-like factor to guide the assembly of the PSI subunits. This Huperzia lucidula (Shining clubmoss) protein is Photosystem I assembly protein Ycf3.